A 172-amino-acid chain; its full sequence is Hemagglutinin/amebocyte aggregation factor (172 aa).

The first 19 residues, 1–19, serve as a signal peptide directing secretion; the sequence is MNSPAIVIIIFSTLTFSEA. Repeat copies occupy residues 21–25, 50–54, 73–77, and 102–106. 5 disulfide bridges follow: Cys32-Cys58, Cys67-Cys172, Cys84-Cys110, Cys111-Cys117, and Cys123-Cys167. A run of 2 repeats spans residues 129–133 and 158–162.

The protein belongs to the dermatopontin family.

The protein localises to the secreted. Functionally, possesses the property of inducing both aggregation of amebocytes and agglutination of erythrocytes. The sequence is that of Hemagglutinin/amebocyte aggregation factor from Limulus polyphemus (Atlantic horseshoe crab).